Here is a 260-residue protein sequence, read N- to C-terminus: Triosephosphate isomerase (260 aa).

A substrate-binding site is contributed by 11–13; it reads NWK. The active-site Electrophile is His103. Glu175 functions as the Proton acceptor in the catalytic mechanism. Substrate contacts are provided by residues Gly181, Ser220, and 241-242; that span reads GG.

It belongs to the triosephosphate isomerase family. In terms of assembly, homodimer.

The protein localises to the cytoplasm. The enzyme catalyses D-glyceraldehyde 3-phosphate = dihydroxyacetone phosphate. The protein operates within carbohydrate biosynthesis; gluconeogenesis. It functions in the pathway carbohydrate degradation; glycolysis; D-glyceraldehyde 3-phosphate from glycerone phosphate: step 1/1. Involved in the gluconeogenesis. Catalyzes stereospecifically the conversion of dihydroxyacetone phosphate (DHAP) to D-glyceraldehyde-3-phosphate (G3P). In Shewanella sediminis (strain HAW-EB3), this protein is Triosephosphate isomerase.